A 41-amino-acid chain; its full sequence is Photosystem I reaction center subunit IX (41 aa).

The helical transmembrane segment at 7 to 27 (YLSTAPVITAIWLGITAGILI) threads the bilayer.

The protein belongs to the PsaJ family.

Its subcellular location is the cellular thylakoid membrane. In terms of biological role, may help in the organization of the PsaE and PsaF subunits. This chain is Photosystem I reaction center subunit IX, found in Cyanothece sp. (strain PCC 7425 / ATCC 29141).